The chain runs to 174 residues: ATP synthase subunit delta (174 aa).

The protein belongs to the ATPase delta chain family. In terms of assembly, F-type ATPases have 2 components, F(1) - the catalytic core - and F(0) - the membrane proton channel. F(1) has five subunits: alpha(3), beta(3), gamma(1), delta(1), epsilon(1). F(0) has three main subunits: a(1), b(2) and c(10-14). The alpha and beta chains form an alternating ring which encloses part of the gamma chain. F(1) is attached to F(0) by a central stalk formed by the gamma and epsilon chains, while a peripheral stalk is formed by the delta and b chains.

Its subcellular location is the cell inner membrane. Functionally, f(1)F(0) ATP synthase produces ATP from ADP in the presence of a proton or sodium gradient. F-type ATPases consist of two structural domains, F(1) containing the extramembraneous catalytic core and F(0) containing the membrane proton channel, linked together by a central stalk and a peripheral stalk. During catalysis, ATP synthesis in the catalytic domain of F(1) is coupled via a rotary mechanism of the central stalk subunits to proton translocation. In terms of biological role, this protein is part of the stalk that links CF(0) to CF(1). It either transmits conformational changes from CF(0) to CF(1) or is implicated in proton conduction. The protein is ATP synthase subunit delta of Francisella tularensis subsp. mediasiatica (strain FSC147).